The sequence spans 282 residues: Proteasome subunit beta (282 aa).

Positions 1–54 (MGSHRDLPAGMVNHIFTNSGISSFTEFVGSYAPDLLPGRNETLAAPVGDRIPHA) are cleaved as a propeptide — removed in mature form; by autocatalysis. Thr55 serves as the catalytic Nucleophile.

This sequence belongs to the peptidase T1B family. As to quaternary structure, the 20S proteasome core is composed of 14 alpha and 14 beta subunits that assemble into four stacked heptameric rings, resulting in a barrel-shaped structure. The two inner rings, each composed of seven catalytic beta subunits, are sandwiched by two outer rings, each composed of seven alpha subunits. The catalytic chamber with the active sites is on the inside of the barrel. Has a gated structure, the ends of the cylinder being occluded by the N-termini of the alpha-subunits. Is capped by the proteasome-associated ATPase, ARC.

Its subcellular location is the cytoplasm. The enzyme catalyses Cleavage of peptide bonds with very broad specificity.. It participates in protein degradation; proteasomal Pup-dependent pathway. The formation of the proteasomal ATPase ARC-20S proteasome complex, likely via the docking of the C-termini of ARC into the intersubunit pockets in the alpha-rings, may trigger opening of the gate for substrate entry. Interconversion between the open-gate and close-gate conformations leads to a dynamic regulation of the 20S proteasome proteolysis activity. In terms of biological role, component of the proteasome core, a large protease complex with broad specificity involved in protein degradation. The chain is Proteasome subunit beta from Streptosporangium roseum (strain ATCC 12428 / DSM 43021 / JCM 3005 / KCTC 9067 / NCIMB 10171 / NRRL 2505 / NI 9100).